A 264-amino-acid chain; its full sequence is Major prion protein 1 (264 aa).

Positions 1 to 24 (MVKSHIGSWILVLFVAMWSDVALC) are cleaved as a signal peptide. The interaction with GRB2, ERI3 and SYN1 stretch occupies residues 25 to 241 (KKRPKPGGGW…ESEAYYQRGA (217 aa)). A disordered region spans residues 28 to 118 (PKPGGGWNTG…QWNKPSKPKT (91 aa)). Repeat copies occupy residues 54 to 62 (SQGGGGWGQ), 63 to 70 (PHGGGWGQ), 71 to 78 (PHGGGWGQ), 79 to 86 (PHGGGWGQ), 87 to 94 (PHGGGWGQ), and 95 to 103 (PHGGGGWGQ). Residues 54–103 (SQGGGGWGQPHGGGWGQPHGGGWGQPHGGGWGQPHGGGWGQPHGGGGWGQ) form a 6 X 8 AA tandem repeats of P-H-G-G-G-W-G-Q region. Positions 55–107 (QGGGGWGQPHGGGWGQPHGGGWGQPHGGGWGQPHGGGWGQPHGGGGWGQGGTH) are enriched in gly residues. Residues His72, Gly73, Gly74, His80, Gly81, Gly82, His88, Gly89, Gly90, His96, Gly98, and Gly99 each contribute to the Cu(2+) site. An intrachain disulfide couples Cys190 to Cys225. N-linked (GlcNAc...) asparagine glycans are attached at residues Asn192 and Asn208. Residue Ala241 is the site of GPI-anchor amidated alanine attachment. Positions 242–264 (SVILFSSPPVILLISFLIFLIVG) are cleaved as a propeptide — removed in mature form.

It belongs to the prion family. Monomer and homodimer. Has a tendency to aggregate into amyloid fibrils containing a cross-beta spine, formed by a steric zipper of superposed beta-strands. Soluble oligomers may represent an intermediate stage on the path to fibril formation. Copper binding may promote oligomerization. Interacts with GRB2, APP, ERI3/PRNPIP and SYN1. Mislocalized cytosolically exposed PrP interacts with MGRN1; this interaction alters MGRN1 subcellular location and causes lysosomal enlargement. Interacts with KIAA1191.

It is found in the cell membrane. Its subcellular location is the golgi apparatus. Its primary physiological function is unclear. Has cytoprotective activity against internal or environmental stresses. May play a role in neuronal development and synaptic plasticity. May be required for neuronal myelin sheath maintenance. May play a role in iron uptake and iron homeostasis. Soluble oligomers are toxic to cultured neuroblastoma cells and induce apoptosis (in vitro). Association with GPC1 (via its heparan sulfate chains) targets PRNP to lipid rafts. Also provides Cu(2+) or Zn(2+) for the ascorbate-mediated GPC1 deaminase degradation of its heparan sulfate side chains. This Tragelaphus strepsiceros (Greater kudu) protein is Major prion protein 1.